We begin with the raw amino-acid sequence, 89 residues long: Microcin N (89 aa).

An N-terminal signal peptide occupies residues 1-15 (MRELDREELNCVGGA).

This sequence belongs to the class IIa microcin family. Post-translationally, mass spectrometry suggests 3 of the 4 Met residues of the mature peptide are oxidized.

It is found in the secreted. Its function is as follows. Active against E.coli and Salmonella, but not Listeria or Campylobacter. Channel-forming microcin. Probably neutralized by its immunity protein McnI. In Escherichia coli, this protein is Microcin N.